A 294-amino-acid chain; its full sequence is MASFRRFRLLSPLKPCVTFGRMLYTRIDKDGLTMLAGHLAYVSLLSLVPLITVIFALFAAFPMFAEISIKLKAFIFANFMPATGDIIQNYLEQFVANSNRMTVVGTCGLIVTALLLIYSVDSVLNIIWRSKIQRSLVFSFAVYWMVLTLGPILVGASMVISSYLLSLHWLAHARVDSMIDEILRVFPLLISWVSFWLLYSVVPTVRVPARDALIGALVAALLFELGKKGFAMYITLFPSYQLIYGVLAVIPILFLWVYWSWCIVLLGAEITVTLGEYRAERHHAKSVTTQSPEM.

7 helical membrane passes run 44–64 (LLSL…FPMF), 67–87 (ISIK…GDII), 108–128 (GLIV…NIIW), 136–156 (LVFS…LVGA), 185–205 (VFPL…VPTV), 212–232 (ALIG…GFAM), and 246–266 (VLAV…IVLL).

The protein belongs to the UPF0761 family.

The protein localises to the cell inner membrane. The chain is UPF0761 membrane protein YPN_0254 from Yersinia pestis bv. Antiqua (strain Nepal516).